Here is a 1078-residue protein sequence, read N- to C-terminus: Isoleucine--tRNA ligase (1078 aa).

The 'HIGH' region signature appears at 52-62 (PTANGKPALHH). The 'KMSKS' region signature appears at 637–641 (KMSKS). Residue K640 coordinates ATP.

Belongs to the class-I aminoacyl-tRNA synthetase family. IleS type 2 subfamily. As to quaternary structure, monomer. Requires Zn(2+) as cofactor.

It localises to the cytoplasm. The enzyme catalyses tRNA(Ile) + L-isoleucine + ATP = L-isoleucyl-tRNA(Ile) + AMP + diphosphate. In terms of biological role, catalyzes the attachment of isoleucine to tRNA(Ile). As IleRS can inadvertently accommodate and process structurally similar amino acids such as valine, to avoid such errors it has two additional distinct tRNA(Ile)-dependent editing activities. One activity is designated as 'pretransfer' editing and involves the hydrolysis of activated Val-AMP. The other activity is designated 'posttransfer' editing and involves deacylation of mischarged Val-tRNA(Ile). In Deinococcus radiodurans (strain ATCC 13939 / DSM 20539 / JCM 16871 / CCUG 27074 / LMG 4051 / NBRC 15346 / NCIMB 9279 / VKM B-1422 / R1), this protein is Isoleucine--tRNA ligase.